The primary structure comprises 133 residues: MSTEDLYQDDVEMLDDYEEPVPEQADQQQRDDEYAEHAFGYADSDAEHEEQSGDHHESPMLDSLELDLTLRCGDLRLTLAELRRLDAGSILEVSGIAPGHATLCHGEQVVAEGELVDVEGRLGLQITRLVARS.

Residues 1–21 show a composition bias toward acidic residues; it reads MSTEDLYQDDVEMLDDYEEPV. A disordered region spans residues 1–60; that stretch reads MSTEDLYQDDVEMLDDYEEPVPEQADQQQRDDEYAEHAFGYADSDAEHEEQSGDHHESPM. Basic and acidic residues predominate over residues 49-59; the sequence is EEQSGDHHESP.

It belongs to the FliN/MopA/SpaO family. Homotetramer. The four monomers assemble into two tightly bound homodimers. Interacts with HrcQa.

It localises to the cytoplasm. In terms of biological role, component of the type III secretion system, which is required for effector protein delivery, parasitism, and pathogenicity. Probably participates in the formation of a C-ring-like assembly along with HrcQa. The chain is Type III secretion protein HrcQb (hrcQb) from Pseudomonas syringae pv. syringae.